A 110-amino-acid polypeptide reads, in one-letter code: uncharacterized protein (110 aa).

2 disordered regions span residues 1-41 (MEWG…ERAQ) and 65-110 (LRQL…ASES). Residues 38–68 (ERAQQLLDAVEQRQRQLLDTIAACEEMLRQL) are a coiled coil.

This is an uncharacterized protein from Mus musculus (Mouse).